We begin with the raw amino-acid sequence, 484 residues long: UDP-N-acetylmuramate--L-alanine ligase (484 aa).

Position 125–131 (125–131 (GTHGKTT)) interacts with ATP.

This sequence belongs to the MurCDEF family.

It localises to the cytoplasm. The catalysed reaction is UDP-N-acetyl-alpha-D-muramate + L-alanine + ATP = UDP-N-acetyl-alpha-D-muramoyl-L-alanine + ADP + phosphate + H(+). It functions in the pathway cell wall biogenesis; peptidoglycan biosynthesis. Functionally, cell wall formation. The protein is UDP-N-acetylmuramate--L-alanine ligase of Buchnera aphidicola subsp. Acyrthosiphon pisum (strain 5A).